The primary structure comprises 444 residues: F-box/FBD/LRR-repeat protein At5g53840 (444 aa).

Residues 17-63 (EERLSQLPDHLICVILSHLSTKDAVRTSILSTRWRNLWQLVPVLDFD) enclose the F-box domain. 11 LRR repeats span residues 103–123 (YYLT…IDIS), 124–150 (VFTC…KLSR), 151–171 (VTMV…DLDF), 172–197 (VNFT…TIVK), 199–224 (SEDN…RFDR), 226–252 (NGLV…EFIN), 273–299 (NRSM…TIKD), 300–321 (IFHY…LSAV), 322–347 (CSIS…SLKL), 369–396 (VSSL…YFLE), and 398–423 (STIL…HIRQ). One can recognise an FBD domain in the interval 356–408 (EEVMSSTVPPPCLVSSLKFVKLESQLLGCGTELKVARYFLENSTILEKLTLKI).

The chain is F-box/FBD/LRR-repeat protein At5g53840 from Arabidopsis thaliana (Mouse-ear cress).